A 113-amino-acid polypeptide reads, in one-letter code: Con-Ins G3 (113 aa).

An N-terminal signal peptide occupies residues 1–21 (MTTSFYFLLVALGLLLYVCQS). The propeptide occupies 22-29 (SFGNQHTR). Proline 34 is modified (4-hydroxyproline; partial). 3 disulfides stabilise this stretch: cysteine 38–cysteine 99, cysteine 50–cysteine 112, and cysteine 98–cysteine 103. Glutamate 41 carries the post-translational modification 4-carboxyglutamate. Histidine 51 carries the histidine amide modification. The propeptide at 52 to 92 (GKRNDAGKKRGRASPLWQRQGFLSMLKAKRNEAFFLQRDGR) is c peptide. The residue at position 96 (glutamate 96) is a 4-carboxyglutamate. Proline 102 is subject to 4-hydroxyproline; partial.

It belongs to the insulin family. In terms of assembly, heterodimer of A and B chains; disulfide-linked. Post-translationally, it is noteworthy that in this dimer, in contrast to Con-Ins G1, the chain B is amidated and not the chain A. Expressed by the venom gland.

It localises to the secreted. In terms of biological role, this venom insulin, from a fish-hunting cone snail, facilitates prey capture by rapidly inducing hypoglycemic shock. It is one of the smallest known insulin found in nature and lacks the C-terminal segment of the B chain that, in human insulin, mediates engagement of the insulin receptor (INSR) and assembly of the hormone's hexameric storage form. Despite lacking this segment, it both binds and activates human insulin receptor (long isoform (HIR-B)) with a high potency (EC(50)=242 nM). In vivo, intraperitoneal injection of this peptide into zebrafish lowers blood glucose with a lower potency than human insulin. In addition, when applied to water, this peptide reduces overall locomotor activity of zebrafish larvae, observed as a significant decrease in the percentage of time spent swimming and movement frequency. When tested on a mouse model of diabetes, this insulin also lowers blood glucose with a 10-fold lower potency than human insulin. The polypeptide is Con-Ins G3 (Conus geographus (Geography cone)).